The sequence spans 293 residues: Pyridoxal 5'-phosphate synthase subunit PdxS (293 aa).

Residue D23 coordinates D-ribose 5-phosphate. The active-site Schiff-base intermediate with D-ribose 5-phosphate is K80. G152 lines the D-ribose 5-phosphate pocket. R164 provides a ligand contact to D-glyceraldehyde 3-phosphate. D-ribose 5-phosphate contacts are provided by residues G213 and 234 to 235 (GS).

The protein belongs to the PdxS/SNZ family. As to quaternary structure, in the presence of PdxT, forms a dodecamer of heterodimers.

It carries out the reaction aldehydo-D-ribose 5-phosphate + D-glyceraldehyde 3-phosphate + L-glutamine = pyridoxal 5'-phosphate + L-glutamate + phosphate + 3 H2O + H(+). Its pathway is cofactor biosynthesis; pyridoxal 5'-phosphate biosynthesis. Functionally, catalyzes the formation of pyridoxal 5'-phosphate from ribose 5-phosphate (RBP), glyceraldehyde 3-phosphate (G3P) and ammonia. The ammonia is provided by the PdxT subunit. Can also use ribulose 5-phosphate and dihydroxyacetone phosphate as substrates, resulting from enzyme-catalyzed isomerization of RBP and G3P, respectively. The chain is Pyridoxal 5'-phosphate synthase subunit PdxS from Roseiflexus sp. (strain RS-1).